The chain runs to 417 residues: Cyanophycinase (417 aa).

Positions 1–23 (MIRSFIRSSALLLALLPVTGYSA) are cleaved as a signal peptide. Catalysis depends on charge relay system residues S169, D188, and H222.

The protein belongs to the peptidase S51 family.

Its subcellular location is the secreted. It carries out the reaction [L-4-(L-arginin-2-N-yl)aspartate](n) + H2O = [L-4-(L-arginin-2-N-yl)aspartate](n-1) + L-4-(L-arginin-2-N-yl)aspartate. Its activity is regulated as follows. Inhibited by serine protease inhibitors. Inhibited by N-Bromo-succinimide. In terms of biological role, exopeptidase that catalyzes the hydrolytic cleavage of multi-L-arginyl-poly-L-aspartic acid (cyanophycin; a water-insoluble reserve polymer) into aspartate-arginine dipeptides. The protein is Cyanophycinase (cphE) of Pseudomonas anguilliseptica.